The sequence spans 80 residues: Exodeoxyribonuclease 7 small subunit (80 aa).

Belongs to the XseB family. Heterooligomer composed of large and small subunits.

It is found in the cytoplasm. It catalyses the reaction Exonucleolytic cleavage in either 5'- to 3'- or 3'- to 5'-direction to yield nucleoside 5'-phosphates.. Its function is as follows. Bidirectionally degrades single-stranded DNA into large acid-insoluble oligonucleotides, which are then degraded further into small acid-soluble oligonucleotides. The protein is Exodeoxyribonuclease 7 small subunit of Cronobacter sakazakii (strain ATCC BAA-894) (Enterobacter sakazakii).